The primary structure comprises 478 residues: Glycogen synthase (478 aa).

K15 lines the ADP-alpha-D-glucose pocket.

The protein belongs to the glycosyltransferase 1 family. Bacterial/plant glycogen synthase subfamily.

It carries out the reaction [(1-&gt;4)-alpha-D-glucosyl](n) + ADP-alpha-D-glucose = [(1-&gt;4)-alpha-D-glucosyl](n+1) + ADP + H(+). It participates in glycan biosynthesis; glycogen biosynthesis. In terms of biological role, synthesizes alpha-1,4-glucan chains using ADP-glucose. This chain is Glycogen synthase, found in Clostridium botulinum (strain Eklund 17B / Type B).